We begin with the raw amino-acid sequence, 160 residues long: Transcription elongation factor GreA (160 aa).

Residues 49-75 (SEYDEAKNDQAFTEGKILQLENKLKNA) are a coiled coil.

It belongs to the GreA/GreB family.

Its function is as follows. Necessary for efficient RNA polymerase transcription elongation past template-encoded arresting sites. The arresting sites in DNA have the property of trapping a certain fraction of elongating RNA polymerases that pass through, resulting in locked ternary complexes. Cleavage of the nascent transcript by cleavage factors such as GreA or GreB allows the resumption of elongation from the new 3'terminus. GreA releases sequences of 2 to 3 nucleotides. The protein is Transcription elongation factor GreA of Clostridium botulinum (strain Alaska E43 / Type E3).